A 299-amino-acid chain; its full sequence is tRNA dimethylallyltransferase (299 aa).

10 to 17 contributes to the ATP binding site; it reads GPTAVGKT. 12 to 17 is a substrate binding site; it reads TAVGKT. The interaction with substrate tRNA stretch occupies residues 35 to 38; sequence DSQQ.

This sequence belongs to the IPP transferase family. Monomer. Mg(2+) serves as cofactor.

It carries out the reaction adenosine(37) in tRNA + dimethylallyl diphosphate = N(6)-dimethylallyladenosine(37) in tRNA + diphosphate. In terms of biological role, catalyzes the transfer of a dimethylallyl group onto the adenine at position 37 in tRNAs that read codons beginning with uridine, leading to the formation of N6-(dimethylallyl)adenosine (i(6)A). This Streptococcus thermophilus (strain ATCC BAA-491 / LMD-9) protein is tRNA dimethylallyltransferase.